Reading from the N-terminus, the 131-residue chain is Small ribosomal subunit protein uS8 (131 aa).

It belongs to the universal ribosomal protein uS8 family. As to quaternary structure, part of the 30S ribosomal subunit. Contacts proteins S5 and S12.

In terms of biological role, one of the primary rRNA binding proteins, it binds directly to 16S rRNA central domain where it helps coordinate assembly of the platform of the 30S subunit. The chain is Small ribosomal subunit protein uS8 from Sorangium cellulosum (strain So ce56) (Polyangium cellulosum (strain So ce56)).